The following is a 280-amino-acid chain: UDP-3-O-acyl-N-acetylglucosamine deacetylase (280 aa).

Zn(2+) is bound by residues histidine 77, histidine 238, and aspartate 242. Histidine 265 serves as the catalytic Proton donor.

It belongs to the LpxC family. Requires Zn(2+) as cofactor.

It carries out the reaction a UDP-3-O-[(3R)-3-hydroxyacyl]-N-acetyl-alpha-D-glucosamine + H2O = a UDP-3-O-[(3R)-3-hydroxyacyl]-alpha-D-glucosamine + acetate. The protein operates within glycolipid biosynthesis; lipid IV(A) biosynthesis; lipid IV(A) from (3R)-3-hydroxytetradecanoyl-[acyl-carrier-protein] and UDP-N-acetyl-alpha-D-glucosamine: step 2/6. In terms of biological role, catalyzes the hydrolysis of UDP-3-O-myristoyl-N-acetylglucosamine to form UDP-3-O-myristoylglucosamine and acetate, the committed step in lipid A biosynthesis. This is UDP-3-O-acyl-N-acetylglucosamine deacetylase from Nostoc sp. (strain PCC 7120 / SAG 25.82 / UTEX 2576).